Consider the following 87-residue polypeptide: DNA-directed RNA polymerase subunit omega (87 aa).

This sequence belongs to the RNA polymerase subunit omega family. As to quaternary structure, the RNAP catalytic core consists of 2 alpha, 1 beta, 1 beta' and 1 omega subunit. When a sigma factor is associated with the core the holoenzyme is formed, which can initiate transcription.

It catalyses the reaction RNA(n) + a ribonucleoside 5'-triphosphate = RNA(n+1) + diphosphate. Its function is as follows. Promotes RNA polymerase assembly. Latches the N- and C-terminal regions of the beta' subunit thereby facilitating its interaction with the beta and alpha subunits. The polypeptide is DNA-directed RNA polymerase subunit omega (Leifsonia xyli subsp. xyli (strain CTCB07)).